Here is a 272-residue protein sequence, read N- to C-terminus: Tryptophan synthase alpha chain (272 aa).

Active-site proton acceptor residues include Glu49 and Asp60.

The protein belongs to the TrpA family. Tetramer of two alpha and two beta chains.

The catalysed reaction is (1S,2R)-1-C-(indol-3-yl)glycerol 3-phosphate + L-serine = D-glyceraldehyde 3-phosphate + L-tryptophan + H2O. Its pathway is amino-acid biosynthesis; L-tryptophan biosynthesis; L-tryptophan from chorismate: step 5/5. The alpha subunit is responsible for the aldol cleavage of indoleglycerol phosphate to indole and glyceraldehyde 3-phosphate. The sequence is that of Tryptophan synthase alpha chain from Psychrobacter cryohalolentis (strain ATCC BAA-1226 / DSM 17306 / VKM B-2378 / K5).